The sequence spans 212 residues: External core antigen (212 aa).

The N-terminal stretch at 1-19 (MQLFHLCLIISCSCPTVQA) is a signal peptide. The segment at 25-27 (GWL) is HBEAG. Residues 165 to 212 (NAPILSTLPETTVVRRRGRSPRRRTPSPRRRRSQSPRRRRSQSPASQC) are disordered. Over residues 178–205 (VRRRGRSPRRRTPSPRRRRSQSPRRRRS) the composition is skewed to basic residues. Residues 184–190 (SPRRRTP) form a 1; half-length repeat. The 3 X 8 AA repeats of S-P-R-R-R-R-S-Q stretch occupies residues 184 to 206 (SPRRRTPSPRRRRSQSPRRRRSQ). The propeptide occupies 184-212 (SPRRRTPSPRRRRSQSPRRRRSQSPASQC). 2 consecutive repeat copies span residues 191–198 (SPRRRRSQ) and 199–206 (SPRRRRSQ).

It belongs to the orthohepadnavirus precore antigen family. In terms of assembly, homodimerizes. Phosphorylated. Post-translationally, cleaved by host furin.

It localises to the secreted. The protein resides in the host nucleus. In terms of biological role, may regulate immune response to the intracellular capsid in acting as a T-cell tolerogen, by having an immunoregulatory effect which prevents destruction of infected cells by cytotoxic T-cells. This immune regulation may predispose to chronicity during perinatal infections and prevent severe liver injury during adult infections. In Gibbon hepatitis B virus subtype ayw3q (isolate Hope) (HBVgbn), this protein is External core antigen.